Here is a 372-residue protein sequence, read N- to C-terminus: Cytochrome b (372 aa).

A run of 4 helical transmembrane segments spans residues 25–45 (FGSM…FLAI), 69–90 (WIMQ…YIHI), 105–125 (WLSG…GYVL), and 170–190 (FFAL…IHII). Heme b is bound by residues H75 and H89. Residues H174 and H188 each contribute to the heme b site. H193 contacts a ubiquinone. 4 helical membrane passes run 218–238 (YKDM…LSFS), 280–300 (LGGT…PFTH), 312–332 (LSQA…WTAS), and 339–358 (FVTI…ITIP).

This sequence belongs to the cytochrome b family. In terms of assembly, the cytochrome bc1 complex contains 3 respiratory subunits (MT-CYB, CYC1 and UQCRFS1), 2 core proteins (UQCRC1 and UQCRC2) and probably 6 low-molecular weight proteins. The cofactor is heme b.

It is found in the mitochondrion inner membrane. Its function is as follows. Component of the ubiquinol-cytochrome c reductase complex (complex III or cytochrome b-c1 complex) that is part of the mitochondrial respiratory chain. The b-c1 complex mediates electron transfer from ubiquinol to cytochrome c. Contributes to the generation of a proton gradient across the mitochondrial membrane that is then used for ATP synthesis. This chain is Cytochrome b (MT-CYB), found in Naja multifasciata (Burrowing cobra).